Consider the following 574-residue polypeptide: Proline--tRNA ligase (574 aa).

Belongs to the class-II aminoacyl-tRNA synthetase family. ProS type 1 subfamily. In terms of assembly, homodimer.

Its subcellular location is the cytoplasm. The catalysed reaction is tRNA(Pro) + L-proline + ATP = L-prolyl-tRNA(Pro) + AMP + diphosphate. In terms of biological role, catalyzes the attachment of proline to tRNA(Pro) in a two-step reaction: proline is first activated by ATP to form Pro-AMP and then transferred to the acceptor end of tRNA(Pro). As ProRS can inadvertently accommodate and process non-cognate amino acids such as alanine and cysteine, to avoid such errors it has two additional distinct editing activities against alanine. One activity is designated as 'pretransfer' editing and involves the tRNA(Pro)-independent hydrolysis of activated Ala-AMP. The other activity is designated 'posttransfer' editing and involves deacylation of mischarged Ala-tRNA(Pro). The misacylated Cys-tRNA(Pro) is not edited by ProRS. This Marinomonas sp. (strain MWYL1) protein is Proline--tRNA ligase.